Consider the following 243-residue polypeptide: MRTRVIVNGANGKMGILACETLENHEQFEVVAKLSRQDNLGQSILDTKAQIVVDLTRADCVYENSLTIINHGARPVIGTSGLVETQIDELTKLCEIKQIGGIIAPNFSLGAILMMMLATKASEYFSEVEIIEGHHQQKLDAPSGTALKTAEMIAAARKKPKNKLPLKELTPGARGGSHHDINIHSLRLPGLLARQEVLFGNIGETLSITHNSIDRHCFMPGIVLACQKVLNLTNLVYGLEHLL.

NAD(+)-binding positions include 9-14, 78-80, and 104-107; these read GANGKM, GTS, and APNF. Residue His-134 is the Proton donor/acceptor of the active site. Position 135 (His-135) interacts with (S)-2,3,4,5-tetrahydrodipicolinate. Catalysis depends on Lys-138, which acts as the Proton donor. 144–145 lines the (S)-2,3,4,5-tetrahydrodipicolinate pocket; the sequence is GT.

The protein belongs to the DapB family.

The protein localises to the cytoplasm. It catalyses the reaction (S)-2,3,4,5-tetrahydrodipicolinate + NAD(+) + H2O = (2S,4S)-4-hydroxy-2,3,4,5-tetrahydrodipicolinate + NADH + H(+). It carries out the reaction (S)-2,3,4,5-tetrahydrodipicolinate + NADP(+) + H2O = (2S,4S)-4-hydroxy-2,3,4,5-tetrahydrodipicolinate + NADPH + H(+). The protein operates within amino-acid biosynthesis; L-lysine biosynthesis via DAP pathway; (S)-tetrahydrodipicolinate from L-aspartate: step 4/4. Catalyzes the conversion of 4-hydroxy-tetrahydrodipicolinate (HTPA) to tetrahydrodipicolinate. The chain is 4-hydroxy-tetrahydrodipicolinate reductase from Legionella pneumophila (strain Corby).